We begin with the raw amino-acid sequence, 651 residues long: Probable potassium transport system protein Kup (651 aa).

The next 12 helical transmembrane spans lie at 41–61, 82–102, 130–150, 163–183, 194–214, 235–255, 276–296, 309–329, 366–386, 395–415, 426–446, and 450–470; these read LVLG…IYAF, VVSF…VLFV, LILG…VITP, IVAP…LVTL, VAIV…ASGL, FLTV…LAMT, WLWI…AFIL, MIPS…TVIA, IYIP…VLGF, AYGI…YIVM, ALPI…ANII, and EGGW…WTWV.

Belongs to the HAK/KUP transporter (TC 2.A.72) family.

The protein localises to the cell inner membrane. It carries out the reaction K(+)(in) + H(+)(in) = K(+)(out) + H(+)(out). Its function is as follows. Transport of potassium into the cell. Likely operates as a K(+):H(+) symporter. The sequence is that of Probable potassium transport system protein Kup from Brucella ovis (strain ATCC 25840 / 63/290 / NCTC 10512).